A 333-amino-acid polypeptide reads, in one-letter code: Geranylgeranyl pyrophosphate synthase olcC (333 aa).

Positions 61, 64, and 93 each coordinate isopentenyl diphosphate. Mg(2+) contacts are provided by aspartate 100 and aspartate 104. A dimethylallyl diphosphate-binding site is contributed by arginine 109. Arginine 110 serves as a coordination point for isopentenyl diphosphate. Dimethylallyl diphosphate is bound by residues lysine 187, threonine 188, and glutamine 221. Aspartate 224 contacts Mg(2+). Dimethylallyl diphosphate contacts are provided by asparagine 228, lysine 238, and lysine 248.

Belongs to the FPP/GGPP synthase family. Mg(2+) is required as a cofactor.

The enzyme catalyses isopentenyl diphosphate + dimethylallyl diphosphate = (2E)-geranyl diphosphate + diphosphate. It carries out the reaction isopentenyl diphosphate + (2E)-geranyl diphosphate = (2E,6E)-farnesyl diphosphate + diphosphate. The catalysed reaction is isopentenyl diphosphate + (2E,6E)-farnesyl diphosphate = (2E,6E,10E)-geranylgeranyl diphosphate + diphosphate. Its pathway is secondary metabolite biosynthesis; terpenoid biosynthesis. Its function is as follows. Geranylgeranyl pyrophosphate synthase; part of the gene cluster that mediates the biosynthesis of 15-deoxyoxalicine B. The first step of the pathway is the synthesis of nicotinyl-CoA from nicotinic acid by the nicotinic acid-CoA ligase olcI. Nicotinyl-CoA is then a substrate of polyketide synthase olcA to produce 4-hydroxy-6-(3-pyridinyl)-2H-pyran-2-one (HPPO) which is further prenylated by the polyprenyl transferase olcH to yield geranylgeranyl-HPPO. Geranylgeranyl pyrophosphate is provided by the cluster-specific geranylgeranyl pyrophosphate synthase olcC. The FAD-dependent monooxygenase olcE catalyzes the epoxidation of geranylgeranyl-HPPO and the terpene cyclase olcD catalyzes the cyclization of the terpenoid component, resulting in the formation of the tricyclic terpene moiety seen in predecaturin E. The cytochrome P450 monooxygenase then catalyzes the allylic oxidation of predecaturin E, which is followed by spirocylization with concomitant loss of one molecule of water to form decaturin E. Decaturin E is the substrate of the cytochrome P450 monooxygenase olcJ which hydroxylates it at the C-29 position to form decaturin F. The short-chain dehydrogenase/reductase olcF may catalyze the oxidation of decaturin F to generate the 29-hydroxyl-27-one intermediate, and subsequent hemiacetal formation probably leads to the formation of decaturin C. The dioxygenase olcK may be a peroxisomal enzyme that catalyzes the hydroxylation of decaturin C into decaturin A once decaturin C is shuttled into the peroxisome by the MFS transporter olcL. Finally the cytochrome P450 monooxygenase olcB catalyzes the oxidative rearrangement to yield 15-deoxyoxalicine B. In the absence of olcJ, decaturin E may be shunted to a pathway in which it is oxidized to a ketone, possibly by olcF, to form decaturin D, which undergoes further allylic oxidation to yield decaturin G. Moreover, in the absence of oclK or oclL, oclB can convert decaturin C into 15-deoxyoxalicine A. The protein is Geranylgeranyl pyrophosphate synthase olcC of Penicillium canescens.